The following is a 366-amino-acid chain: Ribosomal RNA large subunit methyltransferase M (366 aa).

S-adenosyl-L-methionine contacts are provided by residues serine 188, 221–224 (CPGG), aspartate 240, aspartate 260, and aspartate 277. Catalysis depends on lysine 306, which acts as the Proton acceptor.

The protein belongs to the class I-like SAM-binding methyltransferase superfamily. RNA methyltransferase RlmE family. RlmM subfamily. Monomer.

It localises to the cytoplasm. The catalysed reaction is cytidine(2498) in 23S rRNA + S-adenosyl-L-methionine = 2'-O-methylcytidine(2498) in 23S rRNA + S-adenosyl-L-homocysteine + H(+). Its function is as follows. Catalyzes the 2'-O-methylation at nucleotide C2498 in 23S rRNA. The protein is Ribosomal RNA large subunit methyltransferase M of Cronobacter sakazakii (strain ATCC BAA-894) (Enterobacter sakazakii).